A 258-amino-acid chain; its full sequence is Ferredoxin--NADP reductase (258 aa).

The region spanning 2–102 is the FAD-binding FR-type domain; it reads SNLNVERVLS…RKPTGTLVTS (101 aa). Asp17 lines the NADP(+) pocket. FAD contacts are provided by residues 51–54, 67–69, 74–77, and Thr117; these read RAYS, FSI, and GPLT. Residues 144-145, 181-182, and Arg190 contribute to the NADP(+) site; these read VR and TR. An FAD-binding site is contributed by 254–258; it reads AFVEK.

The protein belongs to the ferredoxin--NADP reductase type 1 family. In terms of assembly, monomer. Requires FAD as cofactor.

It carries out the reaction 2 reduced [2Fe-2S]-[ferredoxin] + NADP(+) + H(+) = 2 oxidized [2Fe-2S]-[ferredoxin] + NADPH. Its function is as follows. Transports electrons between ferredoxin and NADPH. This chain is Ferredoxin--NADP reductase, found in Azotobacter vinelandii.